A 218-amino-acid polypeptide reads, in one-letter code: Small ribosomal subunit protein uS3c (218 aa).

The KH type-2 domain occupies 47-118; the sequence is VQKNMRTSSG…KLNIAVTRIA (72 aa).

The protein belongs to the universal ribosomal protein uS3 family. In terms of assembly, part of the 30S ribosomal subunit.

It localises to the plastid. The protein resides in the chloroplast. This Nicotiana tomentosiformis (Tobacco) protein is Small ribosomal subunit protein uS3c (rps3).